The primary structure comprises 555 residues: Myo-inositol transporter 2 (555 aa).

Over 1-61 (MSSTLDTITP…NLVRAENEDK (61 aa)) the chain is Cytoplasmic. Residues 62–82 (VTPYFMFLISVAAIAGFLFGY) traverse the membrane as a helical segment. Topologically, residues 83–108 (DTGIVGAALPMVGTSLGHTLSATESE) are extracellular. The helical transmembrane segment at 109–129 (IITAGTTIGAIFGASILGTMA) threads the bilayer. The Cytoplasmic segment spans residues 130–142 (DKLGRKWAMIISD). Residues 143 to 163 (FAFTAGAIIIAASYSVPQIIV) traverse the membrane as a helical segment. Residues 164–165 (GR) lie on the Extracellular side of the membrane. The helical transmembrane segment at 166 to 186 (LVLGVGVGGAAVIAPLYIAEL) threads the bilayer. Over 187 to 200 (APTAVRGRCVGANA) the chain is Cytoplasmic. The helical transmembrane segment at 201 to 221 (FCIPFGQVVASAIGAGFQAGV) threads the bilayer. At 222-228 (PYHIGWR) the chain is on the extracellular side. The helical transmembrane segment at 229-249 (VLFGLGVVPSVVQLCLMHFLP) threads the bilayer. Residues 250–328 (ESPRVLVLRG…AIISVSGVQA (79 aa)) lie on the Cytoplasmic side of the membrane. The chain crosses the membrane as a helical span at residues 329–349 (FGQLTGFNTLLYYSGTIFGLL). The Extracellular portion of the chain corresponds to 350–355 (GLKNGA). A helical transmembrane segment spans residues 356 to 376 (AAGLIPSCLNALFVFIGMSIV). Residues 377 to 385 (DKVGRRKLM) lie on the Cytoplasmic side of the membrane. Residues 386–406 (ITFIPGMMIAFTWTIISFHFL) traverse the membrane as a helical segment. Residues 407 to 427 (TKPTGGLLLKDYQYSTPLVGS) lie on the Extracellular side of the membrane. Residues 428-448 (VLGSIVLFVIPFGLTYSHIIW) traverse the membrane as a helical segment. The Cytoplasmic segment spans residues 449-461 (YQSEFLPLEIRAA). A helical membrane pass occupies residues 462 to 482 (GSAISTTACWLANLVVSVAYL). Topologically, residues 483-487 (TQLEK) are extracellular. The helical transmembrane segment at 488–508 (LGATGTYGLYLGFITIGYIFV) threads the bilayer. The Cytoplasmic segment spans residues 509–555 (YFCYPETKGLSIDETAEIFIDGFGIEKAHQMLREKRAFAAELYAGRA).

Belongs to the major facilitator superfamily. Sugar transporter (TC 2.A.1.1) family.

It localises to the cell membrane. The catalysed reaction is myo-inositol(out) + H(+)(out) = myo-inositol(in) + H(+)(in). Transporter for myo-inositol. The sequence is that of Myo-inositol transporter 2 from Cryptococcus neoformans var. grubii serotype A (strain H99 / ATCC 208821 / CBS 10515 / FGSC 9487) (Filobasidiella neoformans var. grubii).